The chain runs to 574 residues: Phospholipase B-like protein A (574 aa).

A signal peptide spans 1–20 (MRVIRSLLLLTIAIIGSVLS). 3 N-linked (GlcNAc...) asparagine glycosylation sites follow: Asn159, Asn195, and Asn415.

This sequence belongs to the phospholipase B-like family.

The protein localises to the secreted. In terms of biological role, phospholipase that removes both fatty-acid chains from phosphatidylcholine and produces the water-soluble glycerophosphorylcholine. In addition to phosphatidylcholine deacylation, it also hydrolyzes phosphatidylinositol and phosphatidylethanolamine. This Dictyostelium discoideum (Social amoeba) protein is Phospholipase B-like protein A (plbA).